A 264-amino-acid chain; its full sequence is uncharacterized protein (264 aa).

Position 15-22 (15-22) interacts with ATP; sequence KGGTGKTT.

Belongs to the ParA family. MinD subfamily.

This is an uncharacterized protein from Methanocaldococcus jannaschii (strain ATCC 43067 / DSM 2661 / JAL-1 / JCM 10045 / NBRC 100440) (Methanococcus jannaschii).